The sequence spans 553 residues: HTH-type transcriptional regulator SgrR (553 aa).

The 117-residue stretch at 1–117 (MSTARLQQQF…LSQLGRSFRQ (117 aa)) folds into the HTH marR-type domain. The segment at residues 26–49 (LQELAEVLCCSRRHVRSLLGSMQQ) is a DNA-binding region (H-T-H motif). The interval 163-494 (ELEPDLSHHW…EELHQDVELW (332 aa)) is solute-binding.

In terms of biological role, activates the small RNA gene sgrS under glucose-phosphate stress conditions as well as yfdZ. Represses its own transcription under both stress and non-stress conditions. Might act as a sensor of the intracellular accumulation of phosphoglucose by binding these molecules in its C-terminal solute-binding domain. The polypeptide is HTH-type transcriptional regulator SgrR (Yersinia enterocolitica serotype O:8 / biotype 1B (strain NCTC 13174 / 8081)).